Here is a 371-residue protein sequence, read N- to C-terminus: Queuine tRNA-ribosyltransferase (371 aa).

Residue Asp-90 is the Proton acceptor of the active site. Residues 90 to 94 (DSGGF), Asp-144, Gln-188, and Gly-215 each bind substrate. The RNA binding stretch occupies residues 246–252 (GVGTPED). Asp-265 (nucleophile) is an active-site residue. Residues 270-274 (TRNAR) are RNA binding; important for wobble base 34 recognition. Residues Cys-303, Cys-305, Cys-308, and His-334 each coordinate Zn(2+).

It belongs to the queuine tRNA-ribosyltransferase family. In terms of assembly, homodimer. Within each dimer, one monomer is responsible for RNA recognition and catalysis, while the other monomer binds to the replacement base PreQ1. Zn(2+) serves as cofactor.

The catalysed reaction is 7-aminomethyl-7-carbaguanine + guanosine(34) in tRNA = 7-aminomethyl-7-carbaguanosine(34) in tRNA + guanine. It functions in the pathway tRNA modification; tRNA-queuosine biosynthesis. In terms of biological role, catalyzes the base-exchange of a guanine (G) residue with the queuine precursor 7-aminomethyl-7-deazaguanine (PreQ1) at position 34 (anticodon wobble position) in tRNAs with GU(N) anticodons (tRNA-Asp, -Asn, -His and -Tyr). Catalysis occurs through a double-displacement mechanism. The nucleophile active site attacks the C1' of nucleotide 34 to detach the guanine base from the RNA, forming a covalent enzyme-RNA intermediate. The proton acceptor active site deprotonates the incoming PreQ1, allowing a nucleophilic attack on the C1' of the ribose to form the product. After dissociation, two additional enzymatic reactions on the tRNA convert PreQ1 to queuine (Q), resulting in the hypermodified nucleoside queuosine (7-(((4,5-cis-dihydroxy-2-cyclopenten-1-yl)amino)methyl)-7-deazaguanosine). The sequence is that of Queuine tRNA-ribosyltransferase from Neisseria gonorrhoeae (strain ATCC 700825 / FA 1090).